Here is a 368-residue protein sequence, read N- to C-terminus: Transcription factor TGA7 (368 aa).

Residues 70–82 are compositionally biased toward polar residues; that stretch reads HNQIEAEQPSSND. Residues 70–89 are disordered; the sequence is HNQIEAEQPSSNDNQDDDGR. The bZIP domain occupies 91–151; it reads HDKMKRRLAQ…LGPSGSINTG (61 aa). 2 coiled-coil regions span residues 92–142 and 252–285; these read DKMK…QGHL and DQQI…SLAE. The tract at residues 93–113 is basic motif; the sequence is KMKRRLAQNREAARKSRLRKK. Residues 119–133 are leucine-zipper; sequence LEESRLKLSQLEQEL. The DOG1 domain occupies 152–363; the sequence is IASFEMEYSH…RALSSLWAAR (212 aa).

Belongs to the bZIP family. As to quaternary structure, binds DNA as a dimer. Interacts with NPR1 and NPR4. Interacts with GRXC7/ROXY1.

The protein resides in the nucleus. In terms of biological role, transcriptional activator that binds specifically to the DNA sequence 5'-TGACG-3'. Recognizes ocs elements like the as-1 motif of the cauliflower mosaic virus 35S promoter. Binding to the as-1-like cis elements mediate auxin- and salicylic acid-inducible transcription. May be involved in the induction of the systemic acquired resistance (SAR) via its interaction with NPR1. This chain is Transcription factor TGA7 (TGA7), found in Arabidopsis thaliana (Mouse-ear cress).